A 428-amino-acid polypeptide reads, in one-letter code: Adenylosuccinate synthetase, chloroplastic (428 aa).

GTP is bound by residues 17 to 23 (GDEGKGK) and 45 to 47 (GHT). Catalysis depends on Asp-18, which acts as the Proton acceptor. Mg(2+)-binding residues include Asp-18 and Gly-45. Residues 18 to 21 (DEGK), 43 to 46 (NAGH), Thr-135, Arg-149, Asn-226, Thr-241, and Arg-305 each bind IMP. His-46 serves as the catalytic Proton donor. Substrate is bound at residue 301–307 (TTTGRPR). GTP contacts are provided by residues Arg-307, 333-335 (KLD), and 416-418 (GVG).

It belongs to the adenylosuccinate synthetase family. As to quaternary structure, homodimer. Mg(2+) serves as cofactor.

The protein localises to the plastid. The protein resides in the chloroplast. It catalyses the reaction IMP + L-aspartate + GTP = N(6)-(1,2-dicarboxyethyl)-AMP + GDP + phosphate + 2 H(+). Its pathway is purine metabolism; AMP biosynthesis via de novo pathway; AMP from IMP: step 1/2. Its function is as follows. Plays an important role in the de novo pathway and in the salvage pathway of purine nucleotide biosynthesis. Catalyzes the first committed step in the biosynthesis of AMP from IMP. The protein is Adenylosuccinate synthetase, chloroplastic of Ostreococcus lucimarinus (strain CCE9901).